The sequence spans 626 residues: Two-component response regulator ORR24 (626 aa).

The interval 1-22 (MTVEERQGRVGGHGVSGGGGGR) is disordered. Positions 9 to 22 (RVGGHGVSGGGGGR) are enriched in gly residues. Residues 30-145 (RVLAVDDDPT…QLRTIWQHVI (116 aa)) enclose the Response regulatory domain. Asp-81 is modified (4-aspartylphosphate). Basic and acidic residues predominate over residues 151-162 (DAKNRGNDDDAG). Disordered stretches follow at residues 151–215 (DAKN…KKPR) and 402–440 (PLES…RTTN). Over residues 191 to 202 (NGDDGDDSDENS) the composition is skewed to acidic residues. The myb-like GARP DNA-binding region spans 210–269 (TQKKPRVVWSVELHRKFVAAVNQLGIEKAVPKKILDLMNVENITRENVASHLQKYRLYLK). A compositionally biased stretch (polar residues) spans 402–421 (PLESSNQQHLSRVHSSSADP).

It belongs to the ARR family. Type-B subfamily. Post-translationally, two-component system major event consists of a His-to-Asp phosphorelay between a sensor histidine kinase (HK) and a response regulator (RR). In plants, the His-to-Asp phosphorelay involves an additional intermediate named Histidine-containing phosphotransfer protein (HPt). This multistep phosphorelay consists of a His-Asp-His-Asp sequential transfer of a phosphate group between first a His and an Asp of the HK protein, followed by the transfer to a conserved His of the HPt protein and finally the transfer to an Asp in the receiver domain of the RR protein.

The protein resides in the nucleus. In terms of biological role, transcriptional activator that binds specific DNA sequence. Functions as a response regulator involved in His-to-Asp phosphorelay signal transduction system. Phosphorylation of the Asp residue in the receiver domain activates the ability of the protein to promote the transcription of target genes. May directly activate some type-A response regulators in response to cytokinins. The sequence is that of Two-component response regulator ORR24 from Oryza sativa subsp. japonica (Rice).